The chain runs to 388 residues: MSTVFNTNPVDVLNEPMFFGSGLGLARYDIQRHRVFEELIERQISFFWRPEEVNLMMDAAQFNKLPQYQQNIFTNNLKYQSLLDSIQGRAPSAVLMSLISDPSLDTWVATWTFSETIHSRSYTHIMRNLYTDPSKVFDEIVLDEAIMKRAESIGRYYDDVLVKTREWENAKDMVEYYKDQGLILADKDVEQRAKRDLMKSLYLCLHVINALEAIRFYVSFACTFNFHKNMEIMEGNAKIMKFIARDEQLHLKGTQYIIRQLQSGTDGDEWVKIAQECEQEAVDIFMEVNRQEKDWAVHLFKDGDVPGLNTNSMWSFIDYLTVSRMKQCGLPCPITDAPVKHPYPWIREYLNSDNVQSAPQEVELSSYLVAQIDNDVDDKVMMSFKKYF.

3 residues coordinate Fe cation: Asp84, Glu115, and His118. Tyr122 is an active-site residue. Residues Glu212, Glu247, and His250 each coordinate Fe cation.

This sequence belongs to the ribonucleoside diphosphate reductase small chain family. In terms of assembly, heterodimer of a large and a small subunit. The cofactor is Fe cation.

It carries out the reaction a 2'-deoxyribonucleoside 5'-diphosphate + [thioredoxin]-disulfide + H2O = a ribonucleoside 5'-diphosphate + [thioredoxin]-dithiol. Functionally, provides the precursors necessary for DNA synthesis. Catalyzes the biosynthesis of deoxyribonucleotides from the corresponding ribonucleotides. The chain is Ribonucleoside-diphosphate reductase subunit beta (NRDB) from Escherichia coli (Bacteriophage T4).